A 3396-amino-acid chain; its full sequence is Versican core protein (3396 aa).

The signal sequence occupies residues 1–20 (MFINIKSILWMCSTLIVTHA). The Ig-like V-type domain occupies 21–146 (LHKVKVGKSP…EDTQDTVSLT (126 aa)). Cystine bridges form between Cys44–Cys130, Cys172–Cys243, Cys196–Cys217, Cys270–Cys345, and Cys294–Cys315. The N-linked (GlcNAc...) asparagine glycan is linked to Asn57. Link domains follow at residues 150–245 (VVFH…YCYV) and 251–347 (DVFH…YCFK). A glycan (N-linked (GlcNAc...) asparagine) is linked at Asn330. The interval 348–1335 (PKEATTIDLS…IIEVRENKTG (988 aa)) is GAG-alpha (glucosaminoglycan attachment domain). A compositionally biased stretch (polar residues) spans 420 to 430 (ATKLPTPTGST). Disordered regions lie at residues 420 to 439 (ATKL…MDDY) and 603 to 622 (STTV…MDDW). A glycan (N-linked (GlcNAc...) asparagine) is linked at Asn615. A glycan (O-linked (Xyl...) (chondroitin sulfate) serine) is linked at Ser659. Asn782 and Asn809 each carry an N-linked (GlcNAc...) asparagine glycan. Disordered stretches follow at residues 807-829 (EDNT…LPPA), 1126-1154 (IGPK…TSSL), and 1277-1316 (REYF…PAST). Residues 811 to 824 (TSKPLESTEPSASS) show a composition bias toward polar residues. A compositionally biased stretch (low complexity) spans 1143-1154 (EGSSTTGFTSSL). 2 N-linked (GlcNAc...) asparagine glycosylation sites follow: Asn1332 and Asn1398. The GAG-beta stretch occupies residues 1336 to 3089 (RMSDLSVIGH…VEGTAIYLPG (1754 aa)). Disordered stretches follow at residues 1420 to 1497 (VPKD…SGGE) and 1510 to 1539 (FESG…HTEP). Residues 1422–1433 (KDPEAAEARRGQ) are compositionally biased toward basic and acidic residues. N-linked (GlcNAc...) asparagine glycans are attached at residues Asn1442 and Asn1468. Residues 1469 to 1480 (ESTETTESLEVT) are compositionally biased toward low complexity. Basic and acidic residues predominate over residues 1517-1538 (KGAESVTERDTEVGHQAHEHTE). O-linked (Xyl...) (chondroitin sulfate) serine glycans are attached at residues Ser1548 and Ser1631. An N-linked (GlcNAc...) asparagine glycan is attached at Asn1663. Disordered stretches follow at residues 1717-1737 (STTV…TAST) and 1759-1789 (PNVA…MTDS). Positions 1720–1729 (VEEKKRKEEE) are enriched in basic and acidic residues. Residues 1760 to 1781 (NVATSSDSGTRKSFMSLTTPTQ) are compositionally biased toward polar residues. The N-linked (GlcNAc...) asparagine glycan is linked to Asn1898. 2 O-linked (Xyl...) (chondroitin sulfate) serine glycosylation sites follow: Ser1935 and Ser1959. 3 disordered regions span residues 1962–1994 (AAFR…STMV), 2107–2134 (RQEI…NSPA), and 2168–2188 (KEMK…PDAN). Residues 1969–1978 (TSPSTVPTSV) are compositionally biased toward low complexity. Acidic residues predominate over residues 2111-2120 (ESETTSEEQI). The residue at position 2116 (Ser2116) is a Phosphoserine; by FAM20C. N-linked (GlcNAc...) asparagine glycosylation is present at Asn2179. O-linked (Xyl...) (chondroitin sulfate) serine glycans are attached at residues Ser2247 and Ser2254. N-linked (GlcNAc...) asparagine glycans are attached at residues Asn2272, Asn2280, Asn2360, Asn2385, and Asn2392. 4 disordered regions span residues 2371 to 2396 (TSRP…ETTT), 2445 to 2473 (SATT…EVPS), 2493 to 2518 (SEQN…STDG), and 2598 to 2617 (DTEV…DDST). 2 stretches are compositionally biased toward polar residues: residues 2445 to 2461 (SATT…TFVS) and 2496 to 2513 (NKSS…VSYE). Asn2496 carries N-linked (GlcNAc...) asparagine glycosylation. The residue at position 2608 (Ser2608) is a Phosphoserine. Position 2617 is a phosphothreonine (Thr2617). The N-linked (GlcNAc...) asparagine glycan is linked to Asn2628. Ser2722, Ser2723, and Ser2767 each carry an O-linked (Xyl...) (chondroitin sulfate) serine glycan. 2 disordered regions span residues 2834–2856 (GSEA…DVGS) and 2881–2905 (EEYL…EDDG). A compositionally biased stretch (basic and acidic residues) spans 2896 to 2905 (TKLEPSEDDG). Asn2934 is a glycosylation site (N-linked (GlcNAc...) asparagine). An O-linked (Xyl...) (chondroitin sulfate) serine glycan is attached at Ser2941. An N-linked (GlcNAc...) asparagine glycan is attached at Asn3067. The 37-residue stretch at 3089–3125 (GPDRCKMNPCLNGGTCYPTETSYVCTCVPGYSGDQCE) folds into the EGF-like 1 domain. 11 disulfide bridges follow: Cys3093–Cys3104, Cys3098–Cys3113, Cys3115–Cys3124, Cys3131–Cys3142, Cys3136–Cys3151, Cys3153–Cys3162, Cys3169–Cys3180, Cys3197–Cys3289, Cys3265–Cys3281, Cys3296–Cys3339, and Cys3325–Cys3352. One can recognise an EGF-like 2; calcium-binding domain in the interval 3127-3163 (DFDECHSNPCRNGATCVDGFNTFRCLCLPSYVGALCE). A C-type lectin domain is found at 3176–3290 (FQGQCYKYFA…CNYHLTYTCK (115 aa)). In terms of domain architecture, Sushi spans 3294-3354 (VACGQPPVVE…WAIPKITCMN (61 aa)). Residues Asn3369 and Asn3379 are each glycosylated (N-linked (GlcNAc...) asparagine). The span at 3371–3380 (SSAKDNSINT) shows a compositional bias: polar residues. The disordered stretch occupies residues 3371 to 3396 (SSAKDNSINTSKHDHRWSRRWQESRR).

It belongs to the aggrecan/versican proteoglycan family. Interacts with FBLN1. In terms of processing, phosphorylated by FAM20C in the extracellular medium. Post-translationally, proteolytically cleaved by ADAMTS5 and ADAMTS15 in the pericellular matrix surrounding myoblasts, facilitating myoblast contact and fusion which is required for skeletal muscle development and regeneration. Detected in placenta (at protein level). Detected in cerebrospinal fluid, fibroblasts and urine (at protein level). Expressed in the retina (at protein level). Cerebral white matter and plasma. Isoform V0: Expressed in normal brain, gliomas, medulloblastomas, schwannomas, neurofibromas, and meningiomas. Isoform V1: Expressed in normal brain, gliomas, medulloblastomas, schwannomas, neurofibromas, and meningiomas. Isoform V2: Restricted to normal brain and gliomas. Isoform V3: Found in all these tissues except medulloblastomas.

Its subcellular location is the secreted. The protein resides in the extracellular space. It localises to the extracellular matrix. It is found in the cell projection. The protein localises to the cilium. Its subcellular location is the photoreceptor outer segment. The protein resides in the interphotoreceptor matrix. May play a role in intercellular signaling and in connecting cells with the extracellular matrix. May take part in the regulation of cell motility, growth and differentiation. Binds hyaluronic acid. The polypeptide is Versican core protein (VCAN) (Homo sapiens (Human)).